We begin with the raw amino-acid sequence, 557 residues long: Low affinity inorganic phosphate transporter 8 (557 aa).

The Cytoplasmic segment spans residues Met1 to His20. A helical transmembrane segment spans residues Tyr21–Ile41. The Extracellular portion of the chain corresponds to Thr42 to Asn70. A helical membrane pass occupies residues Ala71–Gly91. Topologically, residues Asp92 to Lys98 are cytoplasmic. The chain crosses the membrane as a helical span at residues Val99 to Gly119. At Ser120–Cys130 the chain is on the extracellular side. The chain crosses the membrane as a helical span at residues Phe131 to Met151. Residues Ser152–Ser162 lie on the Cytoplasmic side of the membrane. The chain crosses the membrane as a helical span at residues Phe163–Met183. The Extracellular segment spans residues Phe184–Gly210. Residues Asp211–Trp231 traverse the membrane as a helical segment. Residues Arg232 to His294 lie on the Cytoplasmic side of the membrane. The helical transmembrane segment at Gly295–Leu315 threads the bilayer. Over Gln316–Arg346 the chain is Extracellular. The chain crosses the membrane as a helical span at residues Ala347–Ile367. The Cytoplasmic portion of the chain corresponds to Glu368 to Lys369. Residues Ile370 to Leu390 traverse the membrane as a helical segment. Over Gly391–Asn414 the chain is Extracellular. N-linked (GlcNAc...) asparagine glycosylation occurs at Asn406. The helical transmembrane segment at Gly415–Pro435 threads the bilayer. The Cytoplasmic portion of the chain corresponds to Asn436–Gly457. A helical membrane pass occupies residues Ile458 to Ile478. Residues Gly479–Gln490 are Extracellular-facing. The chain crosses the membrane as a helical span at residues Ala491–Glu511. Over Thr512–Val557 the chain is Cytoplasmic. Residues Glu519–Val557 are disordered. Polar residues predominate over residues Thr543 to Val557.

This sequence belongs to the major facilitator superfamily. Phosphate:H(+) symporter (TC 2.A.1.9) family.

Its subcellular location is the cell membrane. It carries out the reaction phosphate(in) + H(+)(in) = phosphate(out) + H(+)(out). In terms of biological role, low-affinity transporter for external inorganic phosphate (Pi) that may be involved in the acquisition of phosphate released by arbuscular mycorrhizal (AM) fungi (e.g. Glomus versiforme and G.intraradices) during AM symbiosis; not required for mycorrhizal arbuscule development. The protein is Low affinity inorganic phosphate transporter 8 of Medicago truncatula (Barrel medic).